A 488-amino-acid chain; its full sequence is Erythromycin resistance ATP-binding protein MsrA (488 aa).

In terms of domain architecture, ABC transporter 1 spans Ile6–Gln199. Gly38–Thr45 is an ATP binding site. Residues Gln200 to Pro298 are Q-linker, rich in Glu and hydrophilic AA. Positions Gln211–Lys255 are disordered. Low complexity predominate over residues Asn222–Lys233. Residues Ser245–Lys255 are compositionally biased toward basic and acidic residues. Residues Ile299–Ile487 form the ABC transporter 2 domain. Residue Gly331–Thr338 participates in ATP binding.

Belongs to the ABC transporter superfamily.

In terms of biological role, confers resistance to 14-membered ring macrolides (like erythromycin) and to B streptogramins, by acting as an ATP-dependent efflux pump. The chain is Erythromycin resistance ATP-binding protein MsrA (msrA) from Staphylococcus epidermidis.